Here is a 238-residue protein sequence, read N- to C-terminus: Phosphatidylcholine synthase (238 aa).

Topologically, residues 1–16 (MPVNLSMTPINKAKAW) are cytoplasmic. Residues 17–37 (GVHAVTASGVILALLALLALV) traverse the membrane as a helical segment. At 38-41 (DNKP) the chain is on the periplasmic side. Residues 42-62 (QACLLWLGLALLVDGLDGTLA) traverse the membrane as a helical segment. At 63 to 75 (RKYEVKEMLPHFD) the chain is on the cytoplasmic side. Residues 76–96 (GSVLDLVIDYLTYVFIPAIFI) form a helical membrane-spanning segment. The Periplasmic segment spans residues 97-104 (YRYIPLPE). The helical transmembrane segment at 105 to 125 (HFELLAVGVILVSSLFCFCNV) threads the bilayer. The Cytoplasmic portion of the chain corresponds to 126–132 (NMKSTDN). A helical membrane pass occupies residues 133–153 (YFVGFPAAWNVVAVYFYVLDL). The Periplasmic segment spans residues 154 to 155 (HP). The helical transmembrane segment at 156–176 (WVNLATVLVLAALTLTRMKFL) threads the bilayer. Over 177–183 (HPFRVRQ) the chain is Cytoplasmic. Residues 184 to 204 (FMPLNIAVTFVWLISSGLLIV) form a helical membrane-spanning segment. Residues 205 to 209 (QQPAD) lie on the Periplasmic side of the membrane. Residues 210–230 (LPILLGLWFAASAYFVGICLW) form a helical membrane-spanning segment. Over 231 to 238 (RSAREWFG) the chain is Cytoplasmic.

The protein belongs to the CDP-alcohol phosphatidyltransferase class-I family. The cofactor is Mn(2+).

The protein localises to the cell inner membrane. The catalysed reaction is a CDP-1,2-diacyl-sn-glycerol + choline = a 1,2-diacyl-sn-glycero-3-phosphocholine + CMP + H(+). In terms of biological role, condenses choline with CDP-diglyceride to produce phosphatidylcholine and CMP. In Pseudomonas aeruginosa (strain ATCC 15692 / DSM 22644 / CIP 104116 / JCM 14847 / LMG 12228 / 1C / PRS 101 / PAO1), this protein is Phosphatidylcholine synthase.